The sequence spans 360 residues: DNA ADP-ribosyl glycohydrolase (360 aa).

Positions 1–155 (MLRFVRGNLL…VYEPVENPKA (155 aa)) constitute a Macro domain. ADP-D-ribose is bound by residues 8-9 (NL), 20-22 (TVN), 31-34 (VALQ), and T79. Residue K80 is the Nucleophile of the active site. ADP-D-ribose is bound at residue 117-121 (GAGNG). Positions 167-338 (LTPARAALLK…VALDALLKRG (172 aa)) are interaction with DarT.

Belongs to the DarG ADP-ribosyl glycohydrolase family. As to quaternary structure, interacts (via C-terminus) with cognate toxin DarT; this heterodimeric complex neutralizes the toxic effect of DarT by preventing ssDNA binding to DarT and consequently inactivating the toxin by direct protein-protein interactions.

It catalyses the reaction an N-(ADP-alpha-D-ribosyl)-thymidine in DNA + H2O = a thymidine in DNA + ADP-D-ribose. Its function is as follows. Antitoxin component of the hybrid type II/IV toxin-antitoxin (TA) system DarTG, which plays a crucial role in controlling bacterial growth and bacteriophage infection. De-ADP-ribosylates DNA modified on thymidine by its cognate toxin DarT, which neutralizes the activity of cognate toxin DarT. Upon expression in E.coli neutralizes the effect of cognate toxin DarT. Upon expression in M.tuberculosis neutralizes the toxic effects of endogenous DarT. The sequence is that of DNA ADP-ribosyl glycohydrolase from Thermus aquaticus (strain ATCC BAA-2747 / Y51MC23).